Consider the following 819-residue polypeptide: Zinc finger protein 27 (819 aa).

Positions Met-1 to Asp-75 constitute a KRAB domain. Residues Pro-93 to Arg-123 are disordered. Positions His-98 to Gly-120 are enriched in basic and acidic residues. 21 consecutive C2H2-type zinc fingers follow at residues Tyr-205–His-227, Tyr-233–His-255, Tyr-261–His-283, His-289–His-311, Tyr-317–His-339, Tyr-345–His-367, Ser-401–His-423, Tyr-429–His-451, Tyr-457–His-479, Tyr-485–His-507, Tyr-513–His-535, Tyr-541–His-563, Tyr-569–His-591, Tyr-597–His-619, His-625–His-647, Tyr-653–His-675, Tyr-681–His-703, Tyr-709–His-731, Tyr-737–His-759, Tyr-765–His-787, and Tyr-793–His-815.

Belongs to the krueppel C2H2-type zinc-finger protein family.

It localises to the nucleus. In terms of biological role, may be involved in transcriptional regulation. This Mus musculus (Mouse) protein is Zinc finger protein 27 (Zfp27).